Reading from the N-terminus, the 195-residue chain is Thymidine kinase (195 aa).

ATP contacts are provided by residues 15 to 22 (GSMFSGKS) and 88 to 91 (DEVQ). Glu-89 (proton acceptor) is an active-site residue. Residues Cys-145, Cys-148, Cys-183, and Cys-186 each coordinate Zn(2+).

The protein belongs to the thymidine kinase family. As to quaternary structure, homotetramer.

It localises to the cytoplasm. It carries out the reaction thymidine + ATP = dTMP + ADP + H(+). The polypeptide is Thymidine kinase (Bacillus cereus (strain 03BB102)).